A 142-amino-acid polypeptide reads, in one-letter code: Baculoviral IAP repeat-containing protein 5 (142 aa).

One copy of the BIR repeat lies at 18–88 (RISTFKNWPF…KHSSGCAFLS (71 aa)). A Phosphoserine; by AURKC modification is found at Ser-20. Lys-23 is subject to N6-acetyllysine. Thr-34 is modified (phosphothreonine; by CDK1 and CDK15). The residue at position 48 (Thr-48) is a Phosphothreonine. 4 residues coordinate Zn(2+): Cys-57, Cys-60, His-77, and Cys-84. N6-acetyllysine is present on residues Lys-90, Lys-110, Lys-112, and Lys-115. A Phosphothreonine; by AURKB modification is found at Thr-117. Residue Lys-129 is modified to N6-acetyllysine.

This sequence belongs to the IAP family. Monomer or homodimer. Exists as a homodimer in the apo state and as a monomer in the CPC-bound state. The monomer protects cells against apoptosis more efficiently than the dimer. Only the dimeric form is capable of enhancing tubulin stability in cells. When phosphorylated, interacts with LAMTOR5/HBXIP; the resulting complex binds pro-CASP9, as well as active CASP9, but much less efficiently. Component of the chromosomal passenger complex (CPC) composed of at least BIRC5/survivin, CDCA8/borealin, INCENP, AURKB or AURKC; in the complex forms a triple-helix bundle-based subcomplex with INCENP and CDCA8. Interacts with JTB. Interacts (via BIR domain) with histone H3 phosphorylated at 'Thr-3' (H3pT3). Interacts with EVI5. Interacts with GTP-bound RAN in both the S and M phases of the cell cycle. Interacts with USP9X. Interacts with tubulin. Interacts with BIRC2/c-IAP1. The acetylated form at Lys-129 interacts with STAT3. The monomeric form deacetylated at Lys-129 interacts with XPO1/CRM1. The monomeric form interacts with XIAP/BIRC4. Both the dimeric and monomeric form can interact with DIABLO/SMAC. Interacts with BIRC6/bruce. Interacts with FBXL7; this interaction facilitates the polyubiquitination and subsequent proteasomal degradation of BIRC5 by the SCF(FBXL7) E3 ubiquitin-protein ligase complex. Ubiquitinated by the Cul9-RING ubiquitin-protein ligase complex, leading to its degradation. Ubiquitination is required for centrosomal targeting. Deubiquitinated by USP35 or USP38; leading to stabilization. In terms of processing, acetylation at Lys-129 results in its homodimerization, while deacetylation promotes the formation of monomers which heterodimerize with XPO1/CRM1 which facilitates its nuclear export. The acetylated form represses STAT3 transactivation. The dynamic equilibrium between its acetylation and deacetylation at Lys-129 determines its interaction with XPO1/CRM1, its subsequent subcellular localization, and its ability to inhibit STAT3 transactivation. Post-translationally, in vitro phosphorylation at Thr-117 by AURKB prevents interaction with INCENP and localization to mitotic chromosomes. Phosphorylation at Thr-48 by CK2 is critical for its mitotic and anti-apoptotic activities. Phosphorylation at Thr-34 by CDK15 is critical for its anti-apoptotic activity. Phosphorylation at Ser-20 by AURKC is critical for regulation of proper chromosome alignment and segregation, and possibly cytokinesis.

The protein resides in the cytoplasm. It is found in the nucleus. It localises to the chromosome. Its subcellular location is the centromere. The protein localises to the cytoskeleton. The protein resides in the spindle. It is found in the kinetochore. It localises to the midbody. Functionally, multitasking protein that has dual roles in promoting cell proliferation and preventing apoptosis. Component of a chromosome passage protein complex (CPC) which is essential for chromosome alignment and segregation during mitosis and cytokinesis. Acts as an important regulator of the localization of this complex; directs CPC movement to different locations from the inner centromere during prometaphase to midbody during cytokinesis and participates in the organization of the center spindle by associating with polymerized microtubules. Involved in the recruitment of CPC to centromeres during early mitosis via association with histone H3 phosphorylated at 'Thr-3' (H3pT3) during mitosis. The complex with RAN plays a role in mitotic spindle formation by serving as a physical scaffold to help deliver the RAN effector molecule TPX2 to microtubules. May counteract a default induction of apoptosis in G2/M phase. The acetylated form represses STAT3 transactivation of target gene promoters. May play a role in neoplasia. Inhibitor of CASP3 and CASP7. Essential for the maintenance of mitochondrial integrity and function. The chain is Baculoviral IAP repeat-containing protein 5 (BIRC5) from Pongo abelii (Sumatran orangutan).